Here is a 264-residue protein sequence, read N- to C-terminus: Phosphonoacetaldehyde hydrolase (264 aa).

The Nucleophile role is filled by Asp-9. Residues Asp-9 and Ala-11 each coordinate Mg(2+). Lys-50 acts as the Schiff-base intermediate with substrate in catalysis. Residue Asp-183 participates in Mg(2+) binding.

Belongs to the HAD-like hydrolase superfamily. PhnX family. In terms of assembly, homodimer. It depends on Mg(2+) as a cofactor.

The catalysed reaction is phosphonoacetaldehyde + H2O = acetaldehyde + phosphate + H(+). In terms of biological role, involved in phosphonate degradation. The chain is Phosphonoacetaldehyde hydrolase from Bacillus cereus (strain ZK / E33L).